Consider the following 169-residue polypeptide: NAD(P)H-quinone oxidoreductase subunit J, chloroplastic (169 aa).

The protein belongs to the complex I 30 kDa subunit family. NDH is composed of at least 16 different subunits, 5 of which are encoded in the nucleus.

The protein resides in the plastid. It is found in the chloroplast thylakoid membrane. It catalyses the reaction a plastoquinone + NADH + (n+1) H(+)(in) = a plastoquinol + NAD(+) + n H(+)(out). The catalysed reaction is a plastoquinone + NADPH + (n+1) H(+)(in) = a plastoquinol + NADP(+) + n H(+)(out). NDH shuttles electrons from NAD(P)H:plastoquinone, via FMN and iron-sulfur (Fe-S) centers, to quinones in the photosynthetic chain and possibly in a chloroplast respiratory chain. The immediate electron acceptor for the enzyme in this species is believed to be plastoquinone. Couples the redox reaction to proton translocation, and thus conserves the redox energy in a proton gradient. The polypeptide is NAD(P)H-quinone oxidoreductase subunit J, chloroplastic (Staurastrum punctulatum (Green alga)).